We begin with the raw amino-acid sequence, 112 residues long: Protein ECM19 (112 aa).

A helical membrane pass occupies residues 35–57 (NTLDMVTIGIACLVGVYTGTRFF). Residues 82-112 (EDGNLLKVTPSLSSTPAAPPTPPTPPTPPQQ) form a disordered region. The span at 98–112 (AAPPTPPTPPTPPQQ) shows a compositional bias: pro residues.

Its subcellular location is the mitochondrion membrane. In terms of biological role, may be involved in cell wall organization and biogenesis. The sequence is that of Protein ECM19 (ECM19) from Saccharomyces cerevisiae (strain ATCC 204508 / S288c) (Baker's yeast).